Consider the following 252-residue polypeptide: Membrane protein insertase YidC (252 aa).

The N-terminal stretch at 1-19 (MKKVLWIIIIILMVGALAG) is a signal peptide. Cysteine 20 carries the N-palmitoyl cysteine lipid modification. The S-diacylglycerol cysteine moiety is linked to residue cysteine 20. 6 helical membrane passes run 34 to 54 (IWNH…ADLL), 58 to 78 (FGLS…PLMI), 131 to 151 (MAGC…YFAI), 162 to 182 (FLWF…VAGI), 201 to 221 (VIIY…PSAL), and 223 to 243 (LYWV…VVRF).

This sequence belongs to the OXA1/ALB3/YidC family. Type 2 subfamily.

The protein resides in the cell membrane. Functionally, required for the insertion and/or proper folding and/or complex formation of integral membrane proteins into the membrane. Involved in integration of membrane proteins that insert both dependently and independently of the Sec translocase complex, as well as at least some lipoproteins. The polypeptide is Membrane protein insertase YidC (Alkalihalophilus pseudofirmus (strain ATCC BAA-2126 / JCM 17055 / OF4) (Bacillus pseudofirmus)).